Reading from the N-terminus, the 63-residue chain is Large ribosomal subunit protein uL30 (63 aa).

Belongs to the universal ribosomal protein uL30 family. In terms of assembly, part of the 50S ribosomal subunit.

In Granulibacter bethesdensis (strain ATCC BAA-1260 / CGDNIH1), this protein is Large ribosomal subunit protein uL30.